Reading from the N-terminus, the 182-residue chain is Ribosome maturation factor RimM (182 aa).

Positions 103 to 182 (EDDYYWKDLM…RVEVDWDPGF (80 aa)) constitute a PRC barrel domain.

Belongs to the RimM family. Binds ribosomal protein uS19.

It is found in the cytoplasm. In terms of biological role, an accessory protein needed during the final step in the assembly of 30S ribosomal subunit, possibly for assembly of the head region. Essential for efficient processing of 16S rRNA. May be needed both before and after RbfA during the maturation of 16S rRNA. It has affinity for free ribosomal 30S subunits but not for 70S ribosomes. The sequence is that of Ribosome maturation factor RimM from Yersinia pestis (strain Pestoides F).